A 179-amino-acid polypeptide reads, in one-letter code: Ribosomal-protein-serine acetyltransferase (179 aa).

One can recognise an N-acetyltransferase domain in the interval 11–172 (LELHAVAENH…NDAYDDVNLY (162 aa)).

The protein belongs to the acetyltransferase family. RimL subfamily.

It is found in the cytoplasm. It carries out the reaction N-terminal L-seryl-[ribosomal protein bL12] + acetyl-CoA = N-terminal N(alpha)-acetyl-L-seryl-[ribosomal protein bL12] + CoA + H(+). This enzyme acetylates the N-terminal serine of ribosomal protein bL12, converting it into the acetylated form of bL12 known as bL7. In Escherichia coli (strain K12), this protein is Ribosomal-protein-serine acetyltransferase.